The following is a 116-amino-acid chain: Ribonuclease P protein component (116 aa).

Belongs to the RnpA family. As to quaternary structure, consists of a catalytic RNA component (M1 or rnpB) and a protein subunit.

The catalysed reaction is Endonucleolytic cleavage of RNA, removing 5'-extranucleotides from tRNA precursor.. Its function is as follows. RNaseP catalyzes the removal of the 5'-leader sequence from pre-tRNA to produce the mature 5'-terminus. It can also cleave other RNA substrates such as 4.5S RNA. The protein component plays an auxiliary but essential role in vivo by binding to the 5'-leader sequence and broadening the substrate specificity of the ribozyme. The polypeptide is Ribonuclease P protein component (Carboxydothermus hydrogenoformans (strain ATCC BAA-161 / DSM 6008 / Z-2901)).